Here is a 358-residue protein sequence, read N- to C-terminus: Type II restriction enzyme SacI (358 aa).

The enzyme catalyses Endonucleolytic cleavage of DNA to give specific double-stranded fragments with terminal 5'-phosphates.. Functionally, a subtype P restriction enzyme that recognizes the double-stranded sequence 5'-GAGCTC-3' and cleaves after T-5. The sequence is that of Type II restriction enzyme SacI from Streptomyces achromogenes.